The sequence spans 612 residues: Dihydroxy-acid dehydratase (612 aa).

Asp-81 is a Mg(2+) binding site. Cys-122 is a binding site for [2Fe-2S] cluster. Positions 123 and 124 each coordinate Mg(2+). Lys-124 is subject to N6-carboxylysine. Residue Cys-195 coordinates [2Fe-2S] cluster. Glu-491 contributes to the Mg(2+) binding site. Ser-517 acts as the Proton acceptor in catalysis.

Belongs to the IlvD/Edd family. Homodimer. It depends on [2Fe-2S] cluster as a cofactor. Mg(2+) is required as a cofactor.

It catalyses the reaction (2R)-2,3-dihydroxy-3-methylbutanoate = 3-methyl-2-oxobutanoate + H2O. It carries out the reaction (2R,3R)-2,3-dihydroxy-3-methylpentanoate = (S)-3-methyl-2-oxopentanoate + H2O. Its pathway is amino-acid biosynthesis; L-isoleucine biosynthesis; L-isoleucine from 2-oxobutanoate: step 3/4. It functions in the pathway amino-acid biosynthesis; L-valine biosynthesis; L-valine from pyruvate: step 3/4. Its function is as follows. Functions in the biosynthesis of branched-chain amino acids. Catalyzes the dehydration of (2R,3R)-2,3-dihydroxy-3-methylpentanoate (2,3-dihydroxy-3-methylvalerate) into 2-oxo-3-methylpentanoate (2-oxo-3-methylvalerate) and of (2R)-2,3-dihydroxy-3-methylbutanoate (2,3-dihydroxyisovalerate) into 2-oxo-3-methylbutanoate (2-oxoisovalerate), the penultimate precursor to L-isoleucine and L-valine, respectively. The protein is Dihydroxy-acid dehydratase of Rhizobium rhizogenes (strain K84 / ATCC BAA-868) (Agrobacterium radiobacter).